Consider the following 131-residue polypeptide: Mediator of RNA polymerase II transcription subunit 31 (131 aa).

Ala-2 carries the N-acetylalanine modification.

Belongs to the Mediator complex subunit 31 family. In terms of assembly, component of the Mediator complex, which is composed of MED1, MED4, MED6, MED7, MED8, MED9, MED10, MED11, MED12, MED13, MED13L, MED14, MED15, MED16, MED17, MED18, MED19, MED20, MED21, MED22, MED23, MED24, MED25, MED26, MED27, MED29, MED30, MED31, CCNC, CDK8 and CDC2L6/CDK11. The MED12, MED13, CCNC and CDK8 subunits form a distinct module termed the CDK8 module. Mediator containing the CDK8 module is less active than Mediator lacking this module in supporting transcriptional activation. Individual preparations of the Mediator complex lacking one or more distinct subunits have been variously termed ARC, CRSP, DRIP, PC2, SMCC and TRAP.

It localises to the nucleus. Its function is as follows. Component of the Mediator complex, a coactivator involved in the regulated transcription of nearly all RNA polymerase II-dependent genes. Mediator functions as a bridge to convey information from gene-specific regulatory proteins to the basal RNA polymerase II transcription machinery. Mediator is recruited to promoters by direct interactions with regulatory proteins and serves as a scaffold for the assembly of a functional preinitiation complex with RNA polymerase II and the general transcription factors. The protein is Mediator of RNA polymerase II transcription subunit 31 (MED31) of Bos taurus (Bovine).